The following is an 81-amino-acid chain: Small ribosomal subunit protein bS16 (81 aa).

The protein belongs to the bacterial ribosomal protein bS16 family.

The chain is Small ribosomal subunit protein bS16 from Clostridium botulinum (strain Eklund 17B / Type B).